The primary structure comprises 317 residues: Acetyl-coenzyme A carboxylase carboxyl transferase subunit alpha (317 aa).

Residues R40–D294 form the CoA carboxyltransferase C-terminal domain.

Belongs to the AccA family. Acetyl-CoA carboxylase is a heterohexamer composed of biotin carboxyl carrier protein (AccB), biotin carboxylase (AccC) and two subunits each of ACCase subunit alpha (AccA) and ACCase subunit beta (AccD).

The protein localises to the cytoplasm. The enzyme catalyses N(6)-carboxybiotinyl-L-lysyl-[protein] + acetyl-CoA = N(6)-biotinyl-L-lysyl-[protein] + malonyl-CoA. It functions in the pathway lipid metabolism; malonyl-CoA biosynthesis; malonyl-CoA from acetyl-CoA: step 1/1. Functionally, component of the acetyl coenzyme A carboxylase (ACC) complex. First, biotin carboxylase catalyzes the carboxylation of biotin on its carrier protein (BCCP) and then the CO(2) group is transferred by the carboxyltransferase to acetyl-CoA to form malonyl-CoA. The sequence is that of Acetyl-coenzyme A carboxylase carboxyl transferase subunit alpha from Actinobacillus succinogenes (strain ATCC 55618 / DSM 22257 / CCUG 43843 / 130Z).